The primary structure comprises 149 residues: MRCPFCAAEETKVVDSRLAADGYQIRRRRECTSCKERFTTFESAELVVPYVIKNNGNRVPFDANKLRVSLSRALEKRPVSADDLEKAISKIIIQLQSTGEREVPSKLVGSLAMDALKQLDKVAYIRFASVYLSFDDIEEFTKEIEKLRE.

A zinc finger spans residues 3–34; it reads CPFCAAEETKVVDSRLAADGYQIRRRRECTSC. Residues 49–139 enclose the ATP-cone domain; it reads PYVIKNNGNR…VYLSFDDIEE (91 aa).

It belongs to the NrdR family. Requires Zn(2+) as cofactor.

Its function is as follows. Negatively regulates transcription of bacterial ribonucleotide reductase nrd genes and operons by binding to NrdR-boxes. This is Transcriptional repressor NrdR from Actinobacillus pleuropneumoniae serotype 5b (strain L20).